Here is a 180-residue protein sequence, read N- to C-terminus: MAELVSKRYASALFELAFEEQKHHKVQEELAFIRSCIEDEPSFFELLKSPLITADEKKDIISNIFRDRVCMEVLNFLYIIIDKGREAYIKDIVNEYILLVDSVQNKVDAVAITAVPMEKQDLLMLQANLSKSSGKNIQLQNQVDPTIIGGVLVKIGDKVIDGTIKNRLATMQEQLSKILV.

The protein belongs to the ATPase delta chain family. F-type ATPases have 2 components, F(1) - the catalytic core - and F(0) - the membrane proton channel. F(1) has five subunits: alpha(3), beta(3), gamma(1), delta(1), epsilon(1). F(0) has three main subunits: a(1), b(2) and c(10-14). The alpha and beta chains form an alternating ring which encloses part of the gamma chain. F(1) is attached to F(0) by a central stalk formed by the gamma and epsilon chains, while a peripheral stalk is formed by the delta and b chains.

The protein localises to the cell membrane. In terms of biological role, f(1)F(0) ATP synthase produces ATP from ADP in the presence of a proton or sodium gradient. F-type ATPases consist of two structural domains, F(1) containing the extramembraneous catalytic core and F(0) containing the membrane proton channel, linked together by a central stalk and a peripheral stalk. During catalysis, ATP synthesis in the catalytic domain of F(1) is coupled via a rotary mechanism of the central stalk subunits to proton translocation. Its function is as follows. This protein is part of the stalk that links CF(0) to CF(1). It either transmits conformational changes from CF(0) to CF(1) or is implicated in proton conduction. This chain is ATP synthase subunit delta, found in Alkaliphilus oremlandii (strain OhILAs) (Clostridium oremlandii (strain OhILAs)).